A 95-amino-acid polypeptide reads, in one-letter code: Small ribosomal subunit protein bS20c (95 aa).

This sequence belongs to the bacterial ribosomal protein bS20 family.

It is found in the plastid. The protein resides in the chloroplast. In terms of biological role, binds directly to 16S ribosomal RNA. The sequence is that of Small ribosomal subunit protein bS20c from Pyropia yezoensis (Susabi-nori).